The chain runs to 378 residues: Spermatogenic leucine zipper protein 1 (378 aa).

Residues 1-31 (MSDTDNSAEMPARCPSPNPAPGAKQEPPNSG) are disordered. Ser106 is subject to Phosphoserine. Residues 116–122 (KNKIRFK) are interaction with PPP1CC isoform gamma-2. The interval 116 to 127 (KNKIRFKDDLFI) is helix-loop-helix motif. The interval 128–193 (HFDPEREQNT…HLRGEYRKLR (66 aa)) is basic motif. Residues 182–233 (SLHLRGEYRKLRNNMEQLLQEADHWSKQHNELSELMRSYQECQNETQETTDK) adopt a coiled-coil conformation. The residue at position 207 (Ser207) is a Phosphoserine. The interval 252-273 (LEEQVKKLSHDTHALHLIAALL) is leucine-zipper.

As to quaternary structure, interacts with PPP1CC isoform gamma-2. This interaction can prevent SPZ1 binding to the E-box and inhibits PPP1CC activity. Post-translationally, phosphorylated by MAPK1/ERK2 and MAPK3/ERK1. Expressed specifically in the testis and epidydimis. In the testis expressed in both germ cells and somatic cells (Sertoli and Leydig cells). Expressed in several tumor cell lines.

Its subcellular location is the cytoplasm. The protein resides in the nucleus. In terms of biological role, transcription factor that binds to the DNA sequence 5'-CANNTG-3'(E box) and the G-box motif. Directly binds to a guanine-rich region of the PCNA promoter and up-regulates its expression which in turn induces cell transformation and tumor formation. May play an important role in the regulation of cell proliferation and differentiation during spermatogenesis. The sequence is that of Spermatogenic leucine zipper protein 1 (Spz1) from Mus musculus (Mouse).